The chain runs to 98 residues: Small ribosomal subunit protein bS16 (98 aa).

It belongs to the bacterial ribosomal protein bS16 family.

This chain is Small ribosomal subunit protein bS16, found in Pseudothermotoga lettingae (strain ATCC BAA-301 / DSM 14385 / NBRC 107922 / TMO) (Thermotoga lettingae).